A 689-amino-acid chain; its full sequence is DNA ligase (689 aa).

Residues 40–44 (DSEYD), 89–90 (SL), and Glu-121 contribute to the NAD(+) site. Lys-123 (N6-AMP-lysine intermediate) is an active-site residue. NAD(+) contacts are provided by Arg-144, Glu-179, Lys-295, and Lys-319. Residues Cys-413, Cys-416, Cys-431, and Cys-437 each coordinate Zn(2+). The BRCT domain occupies 610-689 (REQSGLTDKI…EEWLTLIKNV (80 aa)).

Belongs to the NAD-dependent DNA ligase family. LigA subfamily. Mg(2+) is required as a cofactor. It depends on Mn(2+) as a cofactor.

The catalysed reaction is NAD(+) + (deoxyribonucleotide)n-3'-hydroxyl + 5'-phospho-(deoxyribonucleotide)m = (deoxyribonucleotide)n+m + AMP + beta-nicotinamide D-nucleotide.. DNA ligase that catalyzes the formation of phosphodiester linkages between 5'-phosphoryl and 3'-hydroxyl groups in double-stranded DNA using NAD as a coenzyme and as the energy source for the reaction. It is essential for DNA replication and repair of damaged DNA. This is DNA ligase from Rickettsia conorii (strain ATCC VR-613 / Malish 7).